The following is a 234-amino-acid chain: Purine nucleoside phosphorylase DeoD-type (234 aa).

Position 4 (histidine 4) interacts with a purine D-ribonucleoside. Phosphate contacts are provided by residues glycine 20, arginine 24, arginine 43, and 87-90 (RIGS). A purine D-ribonucleoside contacts are provided by residues glutamate 162, 179–181 (EME), and 203–204 (SD). The active-site Proton donor is the aspartate 204.

The protein belongs to the PNP/UDP phosphorylase family. Homohexamer; trimer of homodimers.

It carries out the reaction a purine D-ribonucleoside + phosphate = a purine nucleobase + alpha-D-ribose 1-phosphate. It catalyses the reaction a purine 2'-deoxy-D-ribonucleoside + phosphate = a purine nucleobase + 2-deoxy-alpha-D-ribose 1-phosphate. Catalyzes the reversible phosphorolytic breakdown of the N-glycosidic bond in the beta-(deoxy)ribonucleoside molecules, with the formation of the corresponding free purine bases and pentose-1-phosphate. This is Purine nucleoside phosphorylase DeoD-type from Jannaschia sp. (strain CCS1).